A 404-amino-acid chain; its full sequence is Tryptophan synthase beta chain (404 aa).

Position 94 is an N6-(pyridoxal phosphate)lysine (K94).

This sequence belongs to the TrpB family. Tetramer of two alpha and two beta chains. The cofactor is pyridoxal 5'-phosphate.

The catalysed reaction is (1S,2R)-1-C-(indol-3-yl)glycerol 3-phosphate + L-serine = D-glyceraldehyde 3-phosphate + L-tryptophan + H2O. It functions in the pathway amino-acid biosynthesis; L-tryptophan biosynthesis; L-tryptophan from chorismate: step 5/5. The beta subunit is responsible for the synthesis of L-tryptophan from indole and L-serine. This is Tryptophan synthase beta chain from Staphylococcus aureus (strain USA300).